The chain runs to 70 residues: Large ribosomal subunit protein uL29 (70 aa).

The protein belongs to the universal ribosomal protein uL29 family.

The protein is Large ribosomal subunit protein uL29 of Prochlorococcus marinus (strain MIT 9313).